The primary structure comprises 484 residues: ATP-dependent rRNA helicase RRP3 (484 aa).

Residues 1–10 (MAIVGSNSVS) are compositionally biased toward polar residues. The segment at 1-61 (MAIVGSNSVS…SSQKSKNIVE (61 aa)) is disordered. The segment covering 18 to 54 (RNDARDLAEKIKRNALKKQEQDKKQQLEEESKPESSQ) has biased composition (basic and acidic residues). Residues 71 to 99 (STFSELKLVPELLEAIQQMKFSKPTPIQS) carry the Q motif motif. The 172-residue stretch at 102 to 273 (IPHALEGKDI…RASLHNPVRV (172 aa)) folds into the Helicase ATP-binding domain. Residue 115–122 (AQTGSGKT) coordinates ATP. The DEAD box signature appears at 221–224 (DEAD). A Helicase C-terminal domain is found at 300–444 (YLIHLLNEFV…KDPSPPKAML (145 aa)). The interval 460 to 484 (RQTKEFHEKTRRGRRGKDDKDREEH) is disordered. A compositionally biased stretch (basic and acidic residues) spans 475–484 (GKDDKDREEH).

It belongs to the DEAD box helicase family. DDX47/RRP3 subfamily. In terms of assembly, interacts with the SSU processome.

The protein localises to the nucleus. The catalysed reaction is ATP + H2O = ADP + phosphate + H(+). Functionally, ATP-dependent rRNA helicase required for pre-ribosomal RNA processing. Involved in the maturation of the 35S-pre-rRNA and to its cleavage to mature 18S rRNA. This chain is ATP-dependent rRNA helicase RRP3, found in Scheffersomyces stipitis (strain ATCC 58785 / CBS 6054 / NBRC 10063 / NRRL Y-11545) (Yeast).